Reading from the N-terminus, the 20-residue chain is SNTSHQDFHLFYGDNGMPVH.

The protein belongs to the cytochrome c oxidase VIIb family. As to quaternary structure, component of the cytochrome c oxidase (complex IV, CIV), a multisubunit enzyme composed of 14 subunits. The complex is composed of a catalytic core of 3 subunits MT-CO1, MT-CO2 and MT-CO3, encoded in the mitochondrial DNA, and 11 supernumerary subunits COX4I, COX5A, COX5B, COX6A, COX6B, COX6C, COX7A, COX7B, COX7C, COX8 and NDUFA4, which are encoded in the nuclear genome. The complex exists as a monomer or a dimer and forms supercomplexes (SCs) in the inner mitochondrial membrane with NADH-ubiquinone oxidoreductase (complex I, CI) and ubiquinol-cytochrome c oxidoreductase (cytochrome b-c1 complex, complex III, CIII), resulting in different assemblies (supercomplex SCI(1)III(2)IV(1) and megacomplex MCI(2)III(2)IV(2)).

The protein resides in the mitochondrion inner membrane. It catalyses the reaction 4 Fe(II)-[cytochrome c] + O2 + 8 H(+)(in) = 4 Fe(III)-[cytochrome c] + 2 H2O + 4 H(+)(out). The protein operates within energy metabolism; oxidative phosphorylation. Component of the cytochrome c oxidase, the last enzyme in the mitochondrial electron transport chain which drives oxidative phosphorylation. The respiratory chain contains 3 multisubunit complexes succinate dehydrogenase (complex II, CII), ubiquinol-cytochrome c oxidoreductase (cytochrome b-c1 complex, complex III, CIII) and cytochrome c oxidase (complex IV, CIV), that cooperate to transfer electrons derived from NADH and succinate to molecular oxygen, creating an electrochemical gradient over the inner membrane that drives transmembrane transport and the ATP synthase. Cytochrome c oxidase is the component of the respiratory chain that catalyzes the reduction of oxygen to water. Electrons originating from reduced cytochrome c in the intermembrane space (IMS) are transferred via the dinuclear copper A center (CU(A)) of subunit 2 and heme A of subunit 1 to the active site in subunit 1, a binuclear center (BNC) formed by heme A3 and copper B (CU(B)). The BNC reduces molecular oxygen to 2 water molecules using 4 electrons from cytochrome c in the IMS and 4 protons from the mitochondrial matrix. In Thunnus obesus (Bigeye tuna), this protein is Cytochrome c oxidase subunit 7B-heart, mitochondrial.